A 913-amino-acid chain; its full sequence is Calcium-activated chloride channel regulator 1 (913 aa).

Positions 1–21 (MESLKSPVFLLILHLLEGVLS) are cleaved as a signal peptide. The metalloprotease domain stretch occupies residues 46–199 (DEALIQHIKD…AITGKNQVRR (154 aa)). Position 156 (His-156) interacts with Zn(2+). The active site involves Glu-157. Zn(2+)-binding residues include His-160 and Asn-167. The VWFA domain occupies 307–476 (IVCLVLDKSG…NGLVDAFAAL (170 aa)). Residues Asn-504, Asn-770, Asn-804, Asn-810, Asn-836, and Asn-887 are each glycosylated (N-linked (GlcNAc...) asparagine).

The protein belongs to the CLCR family. The 110 kDa translation product is autoproteolytically cleaved by the metalloprotease domain in the endoplasmic reticulum into a 75 kDa N-terminal and a 35 kDa C-terminal products that remain physically associated with each other. The cleavage is necessary for calcium-activated chloride channel (CaCC) activation activity. In terms of processing, glycosylated. Exclusively expressed in the digestive and respiratory tracts and in the uterus (at protein level). Expressed in small intestine, colon, stomach, and uterus and slightly expressed in trachea tissue. Exclusively expressed in the mucin granule membranes of gastrointestinal, respiratory, and uterine goblet cells and other mucin-producing cells. In the colon, expressed in the surface mucous cells. In the stomach highly expressed in the surface epithelium in the pylorus. Strongly expressed in the airway epithelium of lung tissues associated with airway hyperresponsiveness (AHR).

It localises to the secreted. The protein resides in the extracellular space. May be involved in mediating calcium-activated chloride conductance. May play critical roles in goblet cell metaplasia, mucus hypersecretion, cystic fibrosis and AHR. May be involved in the regulation of mucus production and/or secretion by goblet cells. Involved in the regulation of tissue inflammation in the innate immune response. May play a role as a tumor suppressor. Induces MUC5AC. The chain is Calcium-activated chloride channel regulator 1 (Clca1) from Mus musculus (Mouse).